Consider the following 312-residue polypeptide: Aspartate carbamoyltransferase catalytic subunit (312 aa).

The carbamoyl phosphate site is built by R55 and T56. K83 is an L-aspartate binding site. Positions 105, 138, and 141 each coordinate carbamoyl phosphate. L-aspartate contacts are provided by R171 and R225. Residues G266 and P267 each contribute to the carbamoyl phosphate site.

Belongs to the aspartate/ornithine carbamoyltransferase superfamily. ATCase family. As to quaternary structure, heterododecamer (2C3:3R2) of six catalytic PyrB chains organized as two trimers (C3), and six regulatory PyrI chains organized as three dimers (R2).

The catalysed reaction is carbamoyl phosphate + L-aspartate = N-carbamoyl-L-aspartate + phosphate + H(+). Its pathway is pyrimidine metabolism; UMP biosynthesis via de novo pathway; (S)-dihydroorotate from bicarbonate: step 2/3. Functionally, catalyzes the condensation of carbamoyl phosphate and aspartate to form carbamoyl aspartate and inorganic phosphate, the committed step in the de novo pyrimidine nucleotide biosynthesis pathway. In Corynebacterium efficiens (strain DSM 44549 / YS-314 / AJ 12310 / JCM 11189 / NBRC 100395), this protein is Aspartate carbamoyltransferase catalytic subunit.